We begin with the raw amino-acid sequence, 237 residues long: Leucyl/phenylalanyl-tRNA--protein transferase (237 aa).

It belongs to the L/F-transferase family.

Its subcellular location is the cytoplasm. It catalyses the reaction N-terminal L-lysyl-[protein] + L-leucyl-tRNA(Leu) = N-terminal L-leucyl-L-lysyl-[protein] + tRNA(Leu) + H(+). It carries out the reaction N-terminal L-arginyl-[protein] + L-leucyl-tRNA(Leu) = N-terminal L-leucyl-L-arginyl-[protein] + tRNA(Leu) + H(+). The catalysed reaction is L-phenylalanyl-tRNA(Phe) + an N-terminal L-alpha-aminoacyl-[protein] = an N-terminal L-phenylalanyl-L-alpha-aminoacyl-[protein] + tRNA(Phe). Its function is as follows. Functions in the N-end rule pathway of protein degradation where it conjugates Leu, Phe and, less efficiently, Met from aminoacyl-tRNAs to the N-termini of proteins containing an N-terminal arginine or lysine. This Aromatoleum aromaticum (strain DSM 19018 / LMG 30748 / EbN1) (Azoarcus sp. (strain EbN1)) protein is Leucyl/phenylalanyl-tRNA--protein transferase.